The sequence spans 358 residues: Probable branched-chain-amino-acid aminotransferase (358 aa).

N6-(pyridoxal phosphate)lysine is present on lysine 196.

This sequence belongs to the class-IV pyridoxal-phosphate-dependent aminotransferase family. Pyridoxal 5'-phosphate serves as cofactor.

The enzyme catalyses L-leucine + 2-oxoglutarate = 4-methyl-2-oxopentanoate + L-glutamate. The catalysed reaction is L-isoleucine + 2-oxoglutarate = (S)-3-methyl-2-oxopentanoate + L-glutamate. It catalyses the reaction L-valine + 2-oxoglutarate = 3-methyl-2-oxobutanoate + L-glutamate. It functions in the pathway amino-acid biosynthesis; L-isoleucine biosynthesis; L-isoleucine from 2-oxobutanoate: step 4/4. The protein operates within amino-acid biosynthesis; L-leucine biosynthesis; L-leucine from 3-methyl-2-oxobutanoate: step 4/4. It participates in amino-acid biosynthesis; L-valine biosynthesis; L-valine from pyruvate: step 4/4. Functionally, acts on leucine, isoleucine and valine. The sequence is that of Probable branched-chain-amino-acid aminotransferase (ilvE) from Staphylococcus aureus (strain MRSA252).